Reading from the N-terminus, the 223-residue chain is Sigma non-opioid intracellular receptor 1 (223 aa).

Residues methionine 1 to tryptophan 9 lie on the Lumenal side of the membrane. Positions glutamine 2–arginine 8 are targeting to endoplasmic reticulum-associated lipid droplets. The chain crosses the membrane as a helical span at residues valine 10–leucine 30. At glycine 31 to serine 223 the chain is on the cytoplasmic side. The interval serine 99–leucine 106 is important for ligand-binding. A C-terminal hydrophobic region region spans residues valine 177–serine 223.

The protein belongs to the ERG2 family. Homotrimer. Forms a ternary complex with ANK2 and ITPR3. The complex is disrupted by agonists. Interacts with KCNA4. Interacts with KCNA2; cocaine consumption leads to increased interaction. Interacts with RNF112 in an oxidative stress-regulated manner.

Its subcellular location is the nucleus inner membrane. It localises to the nucleus outer membrane. It is found in the nucleus envelope. The protein resides in the cytoplasmic vesicle. The protein localises to the endoplasmic reticulum membrane. Its subcellular location is the membrane. It localises to the lipid droplet. It is found in the cell junction. The protein resides in the cell membrane. The protein localises to the cell projection. Its subcellular location is the growth cone. It localises to the postsynaptic density membrane. Functions in lipid transport from the endoplasmic reticulum and is involved in a wide array of cellular functions probably through regulation of the biogenesis of lipid microdomains at the plasma membrane. Involved in the regulation of different receptors it plays a role in BDNF signaling and EGF signaling. Also regulates ion channels like the potassium channel and could modulate neurotransmitter release. Plays a role in calcium signaling through modulation together with ANK2 of the ITP3R-dependent calcium efflux at the endoplasmic reticulum. Plays a role in several other cell functions including proliferation, survival and death. Originally identified for its ability to bind various psychoactive drugs it is involved in learning processes, memory and mood alteration. Necessary for proper mitochondrial axonal transport in motor neurons, in particular the retrograde movement of mitochondria. Plays a role in protecting cells against oxidative stress-induced cell death via its interaction with RNF112. The protein is Sigma non-opioid intracellular receptor 1 (SIGMAR1) of Mustela erminea (Ermine).